The primary structure comprises 383 residues: tRNA-specific 2-thiouridylase MnmA (383 aa).

Residues 9-16 (GMSGGVDS) and Met-35 each bind ATP. Residues 95-97 (NPD) are interaction with target base in tRNA. Residue Cys-100 is the Nucleophile of the active site. The cysteines at positions 100 and 198 are disulfide-linked. Gly-124 provides a ligand contact to ATP. The segment at 148 to 150 (KDQ) is interaction with tRNA. Residue Cys-198 is the Cysteine persulfide intermediate of the active site. Residues 310–311 (RY) are interaction with tRNA.

The protein belongs to the MnmA/TRMU family.

The protein resides in the cytoplasm. The catalysed reaction is S-sulfanyl-L-cysteinyl-[protein] + uridine(34) in tRNA + AH2 + ATP = 2-thiouridine(34) in tRNA + L-cysteinyl-[protein] + A + AMP + diphosphate + H(+). Catalyzes the 2-thiolation of uridine at the wobble position (U34) of tRNA, leading to the formation of s(2)U34. This is tRNA-specific 2-thiouridylase MnmA from Paraburkholderia phytofirmans (strain DSM 17436 / LMG 22146 / PsJN) (Burkholderia phytofirmans).